The sequence spans 840 residues: Leucine--tRNA ligase (840 aa).

The 'HIGH' region signature appears at 44–55; it reads PYPSANGLHVGH. A 'KMSKS' region motif is present at residues 617–621; that stretch reads KMSKS. Lys-620 contributes to the ATP binding site.

This sequence belongs to the class-I aminoacyl-tRNA synthetase family.

Its subcellular location is the cytoplasm. It catalyses the reaction tRNA(Leu) + L-leucine + ATP = L-leucyl-tRNA(Leu) + AMP + diphosphate. This Borreliella afzelii (strain PKo) (Borrelia afzelii) protein is Leucine--tRNA ligase.